We begin with the raw amino-acid sequence, 666 residues long: N-acetylgalactosaminyltransferase 6 (666 aa).

The Cytoplasmic portion of the chain corresponds to 1-11 (MRRPNLKWIVK). The helical; Signal-anchor for type II membrane protein transmembrane segment at 12 to 31 (ASLLLLISLTLFVLITSWIS) threads the bilayer. Residues 32 to 666 (STPYTNKPVH…NYSQDLVLSL (635 aa)) lie on the Lumenal side of the membrane. Positions 90-126 (EPVEEEVDNPHPADDEPQQQPQEELQMAAPADASVKK) are disordered. Positions 107 to 120 (QQQPQEELQMAAPA) are enriched in low complexity. N181 carries N-linked (GlcNAc...) asparagine glycosylation. 5 disulfide bridges follow: C192/C421, C412/C491, C531/C548, C577/C594, and C621/C636. The tract at residues 201–311 (LPTVSVIIIF…YNWLPPLLEP (111 aa)) is catalytic subdomain A. Substrate-binding residues include D242 and R272. Residue N285 is glycosylated (N-linked (GlcNAc...) asparagine). A Mn(2+)-binding site is contributed by D295. S296 is a binding site for substrate. Position 297 (H297) interacts with Mn(2+). Residues 367 to 429 (PFKSPIMAGG…PCSRIGHIYR (63 aa)) form a catalytic subdomain B region. Residue W398 participates in substrate binding. Mn(2+) is bound at residue H426. R429 contributes to the substrate binding site. The region spanning 518–648 (AMGALQNVGN…DNRFQQWNFG (131 aa)) is the Ricin B-type lectin domain. Residues N651 and N657 are each glycosylated (N-linked (GlcNAc...) asparagine).

This sequence belongs to the glycosyltransferase 2 family. GalNAc-T subfamily. The cofactor is Mn(2+). In terms of tissue distribution, expressed during oogenesis, in the somatically derived follicle cells that surround the developing oocyte, which are involved in the maturation of the oocyte and construction of the egg shell, as well as playing a role in subsequent embryonic pattern formation. Expressed in the salivary glands from embryonic stage 12 onwards, becoming stronger at stage 13. During embryonic stages 12-13, also expressed in the posterior midgut and hindgut. During embryonic stages 14-15, expression continues in the hindgut. Expression is detected in the epidermis and antennomaxillary complex during embryonic stages 16-17. In third instar larvae, ubiquitously expressed in wing, eye-antennal, leg and haltere imaginal disks.

It localises to the golgi apparatus membrane. It catalyses the reaction L-seryl-[protein] + UDP-N-acetyl-alpha-D-galactosamine = a 3-O-[N-acetyl-alpha-D-galactosaminyl]-L-seryl-[protein] + UDP + H(+). The catalysed reaction is L-threonyl-[protein] + UDP-N-acetyl-alpha-D-galactosamine = a 3-O-[N-acetyl-alpha-D-galactosaminyl]-L-threonyl-[protein] + UDP + H(+). Its pathway is protein modification; protein glycosylation. Its function is as follows. Glycopeptide transferase involved in O-linked oligosaccharide biosynthesis, which catalyzes the transfer of an N-acetyl-D-galactosamine residue to an already glycosylated peptide. In contrast to other proteins of the family, it does not act as a peptide transferase that transfers GalNAc onto serine or threonine residue on the protein receptor, but instead requires the prior addition of a GalNAc on a peptide before adding additional GalNAc moieties. Some peptide transferase activity is however not excluded, considering that its appropriate peptide substrate may remain unidentified. Prefers the diglycosylated Muc5AC-3/13 as substrate. Might have a role in protein O-glycosylation in the Golgi and thereby in establishing and/or maintaining a proper secretory apparatus structure. The protein is N-acetylgalactosaminyltransferase 6 of Drosophila melanogaster (Fruit fly).